The sequence spans 86 residues: Electron transfer flavoprotein regulatory factor 1 (86 aa).

Belongs to the complex I LYR family. As to quaternary structure, homotetramer. Interacts with NDUFAB1. Interacts with ETFA. Interacts with ETFB.

The protein localises to the mitochondrion. Its function is as follows. Acts as a regulator of the electron transfer flavoprotein by promoting the removal of flavin from the ETF holoenzyme (composed of ETFA and ETFB). The sequence is that of Electron transfer flavoprotein regulatory factor 1 from Mus musculus (Mouse).